A 176-amino-acid polypeptide reads, in one-letter code: Small ribosomal subunit protein uS5 (176 aa).

The S5 DRBM domain maps to F15–V78.

This sequence belongs to the universal ribosomal protein uS5 family. Part of the 30S ribosomal subunit. Contacts proteins S4 and S8.

In terms of biological role, with S4 and S12 plays an important role in translational accuracy. Located at the back of the 30S subunit body where it stabilizes the conformation of the head with respect to the body. The polypeptide is Small ribosomal subunit protein uS5 (Thermosipho africanus (strain TCF52B)).